We begin with the raw amino-acid sequence, 415 residues long: MEKLQDQYSFLCSENIRKTNPLILNILQKLDEEIEKRPKEKITVNIAGNSRLDSGQRITSEDFWLLSKALRNHPCIGGVDVRYNLIGDVGAYYAAKLLQKQPNITYLNLMFNDIGPEGGELIAKALQKNKTLKYLRMTGNKIENTGGMLFAAMLQMNSSLEKLDLGDCDLGLQSVIAFSTVLTQNKAIKGINLNRPILYGEQEESTVHIGHMSKQNHVLVELHMCKHGMKNYGIQQLCNALHSNSTLRYLDVSCNKITRDGMVFLADVLKSNSTLEVLDLSFNRIENAGAKYLSETLTSHNRSLKALSVVSNKIEGEGLVALSQSMNTNLVLSNIYIWGNKFDEDTCVAYSNLIESGRLKPENTDVEPYVVDEHIYLSEVSNGLKRHYYWTPTYGECYVPSSSAGFALVPVGERL.

LRR repeat units lie at residues 246–272 (TLRY…LKSN) and 274–296 (TLEV…LSET).

In terms of assembly, interacts with NPM1 and NCL.

The protein resides in the nucleus. It is found in the nucleolus. The protein localises to the cytoplasm. Functionally, highly expressed in stem cells where it may be involved in regulation of pluripotency. In embryonic stem cells (ESCs), important for normal expression of the pluripotency regulators POU5F1/OCT4 and KLF4. Also important for expression of the ectodermal marker gene NES and the endodermal marker gene GATA4. Promotes stem cell proliferation in vitro. The sequence is that of Leucine-rich repeat-containing protein 34 (Lrrc34) from Rattus norvegicus (Rat).